A 139-amino-acid polypeptide reads, in one-letter code: 6,7-dimethyl-8-ribityllumazine synthase (139 aa).

5-amino-6-(D-ribitylamino)uracil contacts are provided by residues Phe11, 42 to 44 (ALE), and 66 to 68 (VVI). 71 to 72 (ET) serves as a coordination point for (2S)-2-hydroxy-3-oxobutyl phosphate. His74 functions as the Proton donor in the catalytic mechanism. Asn98 is a binding site for 5-amino-6-(D-ribitylamino)uracil. A (2S)-2-hydroxy-3-oxobutyl phosphate-binding site is contributed by Arg112.

The protein belongs to the DMRL synthase family.

The catalysed reaction is (2S)-2-hydroxy-3-oxobutyl phosphate + 5-amino-6-(D-ribitylamino)uracil = 6,7-dimethyl-8-(1-D-ribityl)lumazine + phosphate + 2 H2O + H(+). The protein operates within cofactor biosynthesis; riboflavin biosynthesis; riboflavin from 2-hydroxy-3-oxobutyl phosphate and 5-amino-6-(D-ribitylamino)uracil: step 1/2. Functionally, catalyzes the formation of 6,7-dimethyl-8-ribityllumazine by condensation of 5-amino-6-(D-ribitylamino)uracil with 3,4-dihydroxy-2-butanone 4-phosphate. This is the penultimate step in the biosynthesis of riboflavin. In Novosphingobium aromaticivorans (strain ATCC 700278 / DSM 12444 / CCUG 56034 / CIP 105152 / NBRC 16084 / F199), this protein is 6,7-dimethyl-8-ribityllumazine synthase.